A 372-amino-acid polypeptide reads, in one-letter code: 3-ketodihydrosphingosine reductase TSC10 (372 aa).

Valine 64 contacts NADP(+). NADPH-binding residues include glycine 67, serine 69, glycine 71, arginine 92, lysine 96, aspartate 123, and leucine 124. The short motif at 67–71 is the GXSXG element; sequence GGSQG. Aspartate 123 is an NADP(+) binding site. The Proton donor role is filled by serine 205. Residues tyrosine 219, lysine 223, and serine 254 each contribute to the NADP(+) site. Residue tyrosine 219 is the Proton acceptor of the active site. Lysine 223 serves as the catalytic Lowers pKa of active site Tyr. The chain crosses the membrane as a helical span at residues 321-341; it reads LLQIPLAIFMCIFSPVWNAFV.

It belongs to the short-chain dehydrogenases/reductases (SDR) family.

It is found in the endoplasmic reticulum membrane. It catalyses the reaction sphinganine + NADP(+) = 3-oxosphinganine + NADPH + H(+). The protein operates within lipid metabolism; sphingolipid metabolism. Its function is as follows. Catalyzes the reduction of 3'-oxosphinganine (3-ketodihydrosphingosine/KDS) to sphinganine (dihydrosphingosine/DHS), the second step of de novo sphingolipid biosynthesis. This Yarrowia lipolytica (strain CLIB 122 / E 150) (Yeast) protein is 3-ketodihydrosphingosine reductase TSC10 (TSC10).